We begin with the raw amino-acid sequence, 1073 residues long: APDPGPGPMGMMGARGPPGPPGPPGAQGHTGHGPPGPPGKSGEDGNNGRPGKPGDRGAPGPQGARGFPGTPGLPGMKGHRGYTGLDGRKGEPGGAGAKGEPGAHGAAGSPGLAGSRGRAGPAGPAGARGADGNAGPAGPAGPLGAAGPPGFPGGPGPKGELGPAGATGPSGAQGSRGEPGPNGAVGPVGPPGNPGNNGLNGAKGAAGTPGVAGAPGFPGPRGGPGPQGPQGAAGQRGLAGDPGTQGVKGDGGPKGEPGNSGPQGPPGPQGEEGKRGPTGELGATGPAGNRSGPLGMPGARGATGAAGPRGPPGDAGRAGESGPAGLRGLPGSPGSSGPPGKEGAAGPAGQDGRGGPPGPTGPRGPSGEAGKPGDKGATGPTGLRGAPGPDGNNGATGATGPAGGPGEKGEQGAAGAPGFQGLPGPAGGAGEAGKPGDRGLPGDQGVSGPAGAKGERGNPGAAGASGPQGPLGPRGPAGAPGTDGGKGEPGAAGAAGGPGHQGPGGMPGERGAAGAPGGKGEKGEAGHRGPDGNAGRDGSRGMPGPAGPPGPTGANGDKGESGSFGPAGPAGARGASGERGEVGPAGAPGFAGPPGADGQTGARGERGPSGGKGESGPAGPAGPAGQSGPPGASGPAGPTGARGDNGPPGLTGFPGAAGRVGAAGPAGLVGPPGSAGPAGKDGPRGLRGDPGPSGPSGDQGMVGPPGPSGEKGPSGPAGXPGXPGTSGPLGLQGFVGLPGARGDRGSPGGAGGVGEPGRVGPAGPAGARGNLGLPGMTGPQGEAGREGNPGNDGPPGRPGAPGFKGDRGNRGESGPGGAAGAVGPAGARGAAGPSGPRGEKGVAGEKGERGLRGHAGLQGMPGPSGPSGDTGSAGPNGPAGPRGPAGPHGPPGKDGRAGGHGTLGSPGARGPPGYVGPAGPPGSPGLPGPPGPAGGGYDVSGYDEYRAAKDYEVDATLKSLNTQLENLLTPEGSRKNPARLSHPEWSSGFYPNQGCSNDALKETCLHAHPGSLARAVVVQGSNDVELRFTFSVLEDGCTRTNKPSRLPLLDLAPLDLGGADQEFGLDLGPVCFK.

The disordered stretch occupies residues 1-939; it reads APDPGPGPMG…PGPAGGGYDV (939 aa). Composition is skewed to low complexity over residues 100-148, 178-187, and 194-215; these read EPGA…AAGP, EPGPNGAVGP, and PGNN…AGAP. Over residues 217-227 the composition is skewed to pro residues; that stretch reads FPGPRGGPGPQ. A compositionally biased stretch (low complexity) spans 229 to 239; it reads PQGAAGQRGLA. The segment covering 246–255 has biased composition (gly residues); that stretch reads GVKGDGGPKG. 4 stretches are compositionally biased toward low complexity: residues 296 to 315, 321 to 348, 386 to 399, and 411 to 423; these read MPGA…PGDA, SGPA…AGPA, APGP…TGAT, and QGAA…QGLP. A compositionally biased stretch (gly residues) spans 424–433; sequence GPAGGAGEAG. Over residues 458–468 the composition is skewed to low complexity; the sequence is NPGAAGASGPQ. Positions 481-508 are enriched in gly residues; that stretch reads GTDGGKGEPGAAGAAGGPGHQGPGGMPG. The span at 519-530 shows a compositional bias: basic and acidic residues; that stretch reads KGEKGEAGHRGP. 2 stretches are compositionally biased toward low complexity: residues 561–575 and 584–597; these read SGSF…ARGA and PAGA…PGAD. Residues 607–616 show a composition bias toward gly residues; that stretch reads GPSGGKGESG. Composition is skewed to low complexity over residues 617 to 642, 653 to 680, and 708 to 729; these read PAGP…TGAR, FPGA…PAGK, and SGEK…SGPL. A compositionally biased stretch (gly residues) spans 745-757; sequence GSPGGAGGVGEPG. A compositionally biased stretch (low complexity) spans 758-774; it reads RVGPAGPAGARGNLGLP. Gly residues predominate over residues 811-820; the sequence is GESGPGGAAG. A compositionally biased stretch (low complexity) spans 821 to 836; it reads AVGPAGARGAAGPSGP. The segment covering 837–851 has biased composition (basic and acidic residues); sequence RGEKGVAGEKGERGL. Low complexity-rich tracts occupy residues 857 to 876 and 906 to 917; these read LQGM…AGPN and PGARGPPGYVGP. Positions 918–932 are enriched in pro residues; it reads AGPPGSPGLPGPPGP. One can recognise a Fibrillar collagen NC1 domain in the interval 1039–1073; sequence RTNKPSRLPLLDLAPLDLGGADQEFGLDLGPVCFK.

The protein belongs to the fibrillar collagen family.

The protein resides in the secreted. It localises to the extracellular space. Its subcellular location is the extracellular matrix. The sequence is that of Collagen alpha-2(I) chain from Epinephelus aeneus (White grouper).